We begin with the raw amino-acid sequence, 483 residues long: Nuc-1 negative regulatory protein preg (483 aa).

Low complexity-rich tracts occupy residues 1–32, 60–80, and 176–200; these read MLTR…PRPS, SSRR…PISI, and ASAL…AVAV. 3 disordered regions span residues 1 to 112, 164 to 234, and 434 to 483; these read MLTR…SRPQ, NTVG…SQGD, and CPEP…RHAT. Residues 435–473 show a composition bias toward acidic residues; that stretch reads PEPEEADDEDEDEELDESDAIGDDDDDIDGEGGEREEET.

This sequence belongs to the cyclin family.

Negative regulator, together with pgov, of the transcriptional activator nuc-1, which controls the expression of phosphorous acquisition enzymes. The sequence is that of Nuc-1 negative regulatory protein preg (preg) from Neurospora crassa (strain ATCC 24698 / 74-OR23-1A / CBS 708.71 / DSM 1257 / FGSC 987).